The sequence spans 202 residues: Recombination protein RecR (202 aa).

The segment at 59 to 74 (CSVCFHLSAEPVCEIC) adopts a C4-type zinc-finger fold. One can recognise a Toprim domain in the interval 82–176 (HTICVVADSR…KVTRIAFGLP (95 aa)).

Belongs to the RecR family.

Its function is as follows. May play a role in DNA repair. It seems to be involved in an RecBC-independent recombinational process of DNA repair. It may act with RecF and RecO. This chain is Recombination protein RecR, found in Thermosynechococcus vestitus (strain NIES-2133 / IAM M-273 / BP-1).